The following is a 358-amino-acid chain: Stearoyl-CoA desaturase 2 (358 aa).

At 1–71 (MPAHILQEIS…EGPPPKLEYV (71 aa)) the chain is on the cytoplasmic side. A disordered region spans residues 14–43 (SATTTITAPPSGGQQNGGEKFEKNPHHWGA). The span at 32–43 (EKFEKNPHHWGA) shows a compositional bias: basic and acidic residues. Residues 72–92 (WRNIVLMALLHIGALYGITLV) form a helical membrane-spanning segment. Asn-74 serves as a coordination point for substrate. Topologically, residues 93-96 (PSCK) are lumenal. A helical transmembrane segment spans residues 97-117 (VYTCLFAYLYYVISALGITAG). The Cytoplasmic segment spans residues 118–216 (AHRLWSHRTY…EKLVMFQRRY (99 aa)). Positions 119 and 124 each coordinate Fe cation. The Histidine box-1 signature appears at 119–124 (HRLWSH). Positions 147, 154, and 155 each coordinate substrate. Fe cation contacts are provided by His-156, His-159, and His-160. The short motif at 156–160 (HRAHH) is the Histidine box-2 element. Residues Arg-187 and Lys-188 each coordinate substrate. Residues 217–236 (YKPGLLLMCFILPTLVPWYC) traverse the membrane as a helical segment. The Lumenal portion of the chain corresponds to 237 to 240 (WGET). Residues 241–262 (FVNSLCVSTFLRYAVVLNATWL) traverse the membrane as a helical segment. Trp-261 is a binding site for substrate. Over 263–358 (VNSAAHLYGY…RTGEESCKSG (96 aa)) the chain is Cytoplasmic. Fe cation-binding residues include His-268, His-297, His-300, and His-301. Residues 297 to 301 (HNYHH) carry the Histidine box-3 motif.

It belongs to the fatty acid desaturase type 1 family. Fe(2+) is required as a cofactor. As to expression, detected in brain and adipose tissue, and at much lower levels in testis. Detected in liver when rats are kept on a fat-free diet, but not when their food contains unsaturated fatty acids.

It is found in the endoplasmic reticulum membrane. Its subcellular location is the microsome membrane. The enzyme catalyses octadecanoyl-CoA + 2 Fe(II)-[cytochrome b5] + O2 + 2 H(+) = (9Z)-octadecenoyl-CoA + 2 Fe(III)-[cytochrome b5] + 2 H2O. It carries out the reaction hexadecanoyl-CoA + 2 Fe(II)-[cytochrome b5] + O2 + 2 H(+) = (9Z)-hexadecenoyl-CoA + 2 Fe(III)-[cytochrome b5] + 2 H2O. Its function is as follows. Stearoyl-CoA desaturase that utilizes O(2) and electrons from reduced cytochrome b5 to introduce the first double bond into saturated fatty acyl-CoA substrates. Catalyzes the insertion of a cis double bond at the delta-9 position into fatty acyl-CoA substrates including palmitoyl-CoA and stearoyl-CoA. Gives rise to a mixture of 16:1 and 18:1 unsaturated fatty acids. Contributes to the biosynthesis of membrane phospholipids, cholesterol esters and triglycerides, especially during embryonic development and in neonates. Important for normal permeability barrier function of the skin in neonates. The chain is Stearoyl-CoA desaturase 2 (Scd2) from Rattus norvegicus (Rat).